We begin with the raw amino-acid sequence, 577 residues long: General transcription factor IIF subunit 1 (577 aa).

The tract at residues 1–36 (MSSASKSTPSAASGSSTSAAAAAAASVASGSASSSA) is disordered. Phosphoserine occurs at positions 183, 246, 250, and 252. Residues 236–508 (KITDMDEWID…TSLPTSFSGG (273 aa)) are disordered. Acidic residues predominate over residues 240 to 256 (MDEWIDSEDESDSEDEE). Over residues 257-271 (DKKKKEQEDSDDGKA) the composition is skewed to basic and acidic residues. The segment covering 272 to 285 (KGKGKKGADKKKKK) has biased composition (basic residues). The segment covering 289–304 (DDEAFEESDDGDEEGR) has biased composition (acidic residues). Residues 319–341 (PEAKVDKDMKGVAEEDALRKLLT) are compositionally biased toward basic and acidic residues. Phosphothreonine is present on Thr341. Phosphoserine occurs at positions 342, 352, and 355. Residues 362-376 (GEKKKKDKGKDEVSK) are compositionally biased toward basic and acidic residues. A compositionally biased stretch (low complexity) spans 392–406 (SNGSGDSSTDFSSDS). Residues 423 to 437 (VVKDKDKEKEKEKES) are compositionally biased toward basic and acidic residues. The span at 438-456 (AASSKVIASSSNANKSRSA) shows a compositional bias: low complexity. Residues Ser453 and Ser455 each carry the phosphoserine modification. Thr457 is modified (phosphothreonine). Polar residues-rich tracts occupy residues 471–489 (SLPSDLTASDTSNSPTSTP) and 496–506 (EISTSLPTSFS). Residues Ser482 and Ser484 each carry the phosphoserine modification. Thr488 bears the Phosphothreonine mark.

This sequence belongs to the TFIIF alpha subunit family. As to quaternary structure, heterodimer of an alpha and a beta subunit. In terms of processing, phosphorylated on Ser and other residues by TAF1 and casein kinase II-like kinases.

The protein resides in the nucleus. In terms of biological role, TFIIF is a general transcription initiation factor that binds to RNA polymerase II and helps to recruit it to the initiation complex in collaboration with TFIIB. It promotes transcription elongation. The sequence is that of General transcription factor IIF subunit 1 from Drosophila melanogaster (Fruit fly).